The primary structure comprises 292 residues: Lipoyl synthase (292 aa).

[4Fe-4S] cluster is bound by residues Cys-34, Cys-39, Cys-45, Cys-60, Cys-64, Cys-67, and Ser-273. The 217-residue stretch at Trp-46–Leu-262 folds into the Radical SAM core domain.

Belongs to the radical SAM superfamily. Lipoyl synthase family. It depends on [4Fe-4S] cluster as a cofactor.

The protein resides in the cytoplasm. The enzyme catalyses [[Fe-S] cluster scaffold protein carrying a second [4Fe-4S](2+) cluster] + N(6)-octanoyl-L-lysyl-[protein] + 2 oxidized [2Fe-2S]-[ferredoxin] + 2 S-adenosyl-L-methionine + 4 H(+) = [[Fe-S] cluster scaffold protein] + N(6)-[(R)-dihydrolipoyl]-L-lysyl-[protein] + 4 Fe(3+) + 2 hydrogen sulfide + 2 5'-deoxyadenosine + 2 L-methionine + 2 reduced [2Fe-2S]-[ferredoxin]. The protein operates within protein modification; protein lipoylation via endogenous pathway; protein N(6)-(lipoyl)lysine from octanoyl-[acyl-carrier-protein]: step 2/2. In terms of biological role, catalyzes the radical-mediated insertion of two sulfur atoms into the C-6 and C-8 positions of the octanoyl moiety bound to the lipoyl domains of lipoate-dependent enzymes, thereby converting the octanoylated domains into lipoylated derivatives. The sequence is that of Lipoyl synthase from Ehrlichia ruminantium (strain Welgevonden).